Here is a 124-residue protein sequence, read N- to C-terminus: MALNKEDILTWLEGAKTMEVVDLVTAIEEKFGVTAAVAAGVGGAVSVGSADSEEQTEFDVILMSFGDSKINVIKEVRAITGLGLGEAKALVEAAPKAIKEGLSKSDAEELKKKLEAVGAKVEVK.

The protein belongs to the bacterial ribosomal protein bL12 family. In terms of assembly, homodimer. Part of the ribosomal stalk of the 50S ribosomal subunit. Forms a multimeric L10(L12)X complex, where L10 forms an elongated spine to which 2 to 4 L12 dimers bind in a sequential fashion. Binds GTP-bound translation factors.

In terms of biological role, forms part of the ribosomal stalk which helps the ribosome interact with GTP-bound translation factors. Is thus essential for accurate translation. The chain is Large ribosomal subunit protein bL12 from Borreliella burgdorferi (strain ATCC 35210 / DSM 4680 / CIP 102532 / B31) (Borrelia burgdorferi).